We begin with the raw amino-acid sequence, 1282 residues long: Crescerin-like protein che-12 (1282 aa).

TOG stretches follow at residues 33–240 and 268–515; these read DFDT…EHTE and PSLV…MDSF. 8 HEAT repeats span residues 59 to 96, 100 to 137, 162 to 209, 261 to 300, 308 to 345, 349 to 386, 388 to 421, and 424 to 461; these read QKKG…TFGS, YCMC…LKPE, ELHH…FIGN, RLRF…QITP, PHLH…HLKG, AHIQ…NINP, TVGG…TISP, and FNLQ…LLNG. A disordered region spans residues 566–714; the sequence is IQQQGQAEKP…RSFDDRPAKA (149 aa). Composition is skewed to low complexity over residues 575-592 and 633-644; these read PSFS…HQAQ and SAASNPNSSTSS. The span at 702–712 shows a compositional bias: basic and acidic residues; that stretch reads DPPRSFDDRPA. TOG stretches follow at residues 800–1022 and 1066–1282; these read NMSV…ANVE and TELL…ALIR. HEAT repeat units follow at residues 838–875, 879–917, 919–953, 961–998, 1095–1132, 1177–1214, and 1219–1258; these read DNLK…NLNS, SEME…AATA, KALQ…IQGS, NALS…DPNF, ASDT…SMAK, IEPV…LAYK, and QVEV…LIGE.

Belongs to the Crescerin family. As to expression, detected in a subset of amphid neurons that lack wing- or finger-like ciliary extensions. Likewise, detected in phasmid neurons.

Its subcellular location is the cell projection. The protein localises to the cilium. The protein resides in the perikaryon. It is found in the dendrite. Required for normal structure and function of sensory cilia on amphid neurons, especially for the formation of distal ciliary structures, but is less important for normal assembly of middle and basal ciliary structures. Plays a role in the organization of axoneme microtubule bundles in sensory cilia. Required for normal structure and function of the ASER neuron that mediates attraction to NaCl. Required for normal chemotaxis to NaCl. Required for normal avoidance response to high osmolarity. In contrast, is not required for normal chemotaxis to isoamyl alcohol. Does not play a role in intraflagella transport (IFT). Promotes dauer formation in response to pheromones such as the ascarosides ascr#2, ascr#3, ascr#5, ascr#8 and icas#9. The polypeptide is Crescerin-like protein che-12 (Caenorhabditis elegans).